The chain runs to 547 residues: Probable bifunctional tRNA threonylcarbamoyladenosine biosynthesis protein (547 aa).

The kae1 stretch occupies residues 1-329 (MGNSNELICI…FRTDMVDVNW (329 aa)). Residues H112, H116, and Y133 each contribute to the Fe cation site. Residues 133-137 (YVSGG), D165, G178, E182, and N262 contribute to the L-threonylcarbamoyladenylate site. Fe cation is bound at residue D290. The Protein kinase domain maps to 346–547 (QIPRHLIGKG…KEVEKRGRYL (202 aa)). Residues 352 to 360 (IGKGAEADI) and K373 contribute to the ATP site. The active-site Proton acceptor; for kinase activity is D465.

This sequence in the N-terminal section; belongs to the KAE1 / TsaD family. It in the C-terminal section; belongs to the protein kinase superfamily. Tyr protein kinase family. BUD32 subfamily. In terms of assembly, component of the KEOPS complex that consists of Kae1, Bud32, Cgi121 and Pcc1; the whole complex dimerizes. Fe(2+) serves as cofactor.

The protein resides in the cytoplasm. It catalyses the reaction L-seryl-[protein] + ATP = O-phospho-L-seryl-[protein] + ADP + H(+). The enzyme catalyses L-threonyl-[protein] + ATP = O-phospho-L-threonyl-[protein] + ADP + H(+). The catalysed reaction is L-threonylcarbamoyladenylate + adenosine(37) in tRNA = N(6)-L-threonylcarbamoyladenosine(37) in tRNA + AMP + H(+). Its function is as follows. Required for the formation of a threonylcarbamoyl group on adenosine at position 37 (t(6)A37) in tRNAs that read codons beginning with adenine. Is a component of the KEOPS complex that is probably involved in the transfer of the threonylcarbamoyl moiety of threonylcarbamoyl-AMP (TC-AMP) to the N6 group of A37. The Kae1 domain likely plays a direct catalytic role in this reaction. The Bud32 domain probably displays kinase activity that regulates Kae1 function. The protein is Probable bifunctional tRNA threonylcarbamoyladenosine biosynthesis protein of Methanococcus vannielii (strain ATCC 35089 / DSM 1224 / JCM 13029 / OCM 148 / SB).